We begin with the raw amino-acid sequence, 511 residues long: 2-isopropylmalate synthase (511 aa).

The Pyruvate carboxyltransferase domain maps to 6-269 (IIIFDTTLRD…YTDIKCENIS (264 aa)). Mn(2+)-binding residues include D15, H203, H205, and N239. The segment at 394–511 (VLEKLSVISG…SLKVEERKMA (118 aa)) is regulatory domain.

It belongs to the alpha-IPM synthase/homocitrate synthase family. LeuA type 1 subfamily. Homodimer. Mn(2+) is required as a cofactor.

It is found in the cytoplasm. It carries out the reaction 3-methyl-2-oxobutanoate + acetyl-CoA + H2O = (2S)-2-isopropylmalate + CoA + H(+). The protein operates within amino-acid biosynthesis; L-leucine biosynthesis; L-leucine from 3-methyl-2-oxobutanoate: step 1/4. Its function is as follows. Catalyzes the condensation of the acetyl group of acetyl-CoA with 3-methyl-2-oxobutanoate (2-ketoisovalerate) to form 3-carboxy-3-hydroxy-4-methylpentanoate (2-isopropylmalate). This is 2-isopropylmalate synthase from Campylobacter jejuni subsp. doylei (strain ATCC BAA-1458 / RM4099 / 269.97).